Reading from the N-terminus, the 469-residue chain is Adenosylhomocysteinase (469 aa).

Positions 63, 139, and 164 each coordinate substrate. 165-167 (TTT) contacts NAD(+). Positions 194 and 198 each coordinate substrate. NAD(+) contacts are provided by residues Asn199, 228–233 (GYGDVG), Glu251, Asn300, 321–323 (IGH), and Asn375.

This sequence belongs to the adenosylhomocysteinase family. Requires NAD(+) as cofactor.

The protein resides in the cytoplasm. It catalyses the reaction S-adenosyl-L-homocysteine + H2O = L-homocysteine + adenosine. It functions in the pathway amino-acid biosynthesis; L-homocysteine biosynthesis; L-homocysteine from S-adenosyl-L-homocysteine: step 1/1. May play a key role in the regulation of the intracellular concentration of adenosylhomocysteine. This Pseudomonas fluorescens (strain Pf0-1) protein is Adenosylhomocysteinase.